The following is a 299-amino-acid chain: Oxygen-dependent coproporphyrinogen-III oxidase (299 aa).

A substrate-binding site is contributed by Ser92. Mn(2+) is bound by residues His96 and His106. His106 functions as the Proton donor in the catalytic mechanism. 108–110 (NVR) is a binding site for substrate. His145 and His175 together coordinate Mn(2+). Positions 240–275 (YVEFNLVWDRGTLFGLQTGGRTESILMSMPPLVRWE) are important for dimerization. Residue 258–260 (GGR) participates in substrate binding.

It belongs to the aerobic coproporphyrinogen-III oxidase family. In terms of assembly, homodimer. Requires Mn(2+) as cofactor.

It localises to the cytoplasm. It carries out the reaction coproporphyrinogen III + O2 + 2 H(+) = protoporphyrinogen IX + 2 CO2 + 2 H2O. It participates in porphyrin-containing compound metabolism; protoporphyrin-IX biosynthesis; protoporphyrinogen-IX from coproporphyrinogen-III (O2 route): step 1/1. Functionally, involved in the heme biosynthesis. Catalyzes the aerobic oxidative decarboxylation of propionate groups of rings A and B of coproporphyrinogen-III to yield the vinyl groups in protoporphyrinogen-IX. The polypeptide is Oxygen-dependent coproporphyrinogen-III oxidase (Escherichia coli (strain SE11)).